Consider the following 504-residue polypeptide: 2,3-bisphosphoglycerate-independent phosphoglycerate mutase (504 aa).

The Mn(2+) site is built by Asp11 and Ser61. Ser61 (phosphoserine intermediate) is an active-site residue. Residues His122, 152 to 153, Arg183, Arg189, 255 to 258, and Lys329 each bind substrate; these read RD and RNDR. The Mn(2+) site is built by Asp396, His400, Asp437, His438, and His455.

It belongs to the BPG-independent phosphoglycerate mutase family. In terms of assembly, monomer. Mn(2+) is required as a cofactor.

It carries out the reaction (2R)-2-phosphoglycerate = (2R)-3-phosphoglycerate. Its pathway is carbohydrate degradation; glycolysis; pyruvate from D-glyceraldehyde 3-phosphate: step 3/5. Catalyzes the interconversion of 2-phosphoglycerate and 3-phosphoglycerate. In Bacteroides thetaiotaomicron (strain ATCC 29148 / DSM 2079 / JCM 5827 / CCUG 10774 / NCTC 10582 / VPI-5482 / E50), this protein is 2,3-bisphosphoglycerate-independent phosphoglycerate mutase.